Consider the following 335-residue polypeptide: GTPase Obg (335 aa).

Residues 1–158 (MFVDQITLEL…RQVELELKLI (158 aa)) enclose the Obg domain. The interval 126–145 (NTFFKTSVNRAPTKATPGKP) is disordered. Residues 159–334 (ADIGLVGFPN…LYRFFTQRLA (176 aa)) form the OBG-type G domain. GTP is bound by residues 165 to 172 (GFPNAGKS), 190 to 194 (FTTLA), 215 to 218 (DIPG), 285 to 288 (NKID), and 315 to 317 (SGL). Mg(2+) contacts are provided by serine 172 and threonine 192.

The protein belongs to the TRAFAC class OBG-HflX-like GTPase superfamily. OBG GTPase family. In terms of assembly, monomer. It depends on Mg(2+) as a cofactor.

It is found in the cytoplasm. Its function is as follows. An essential GTPase which binds GTP, GDP and possibly (p)ppGpp with moderate affinity, with high nucleotide exchange rates and a fairly low GTP hydrolysis rate. Plays a role in control of the cell cycle, stress response, ribosome biogenesis and in those bacteria that undergo differentiation, in morphogenesis control. This is GTPase Obg from Chlamydia pneumoniae (Chlamydophila pneumoniae).